The primary structure comprises 169 residues: Allophycocyanin subunit beta-18 (169 aa).

Asn72 is modified (N4-methylasparagine). Cys82 contributes to the (2R,3E)-phycocyanobilin binding site.

The protein belongs to the phycobiliprotein family. Heterodimer of an alpha and a beta chain. Post-translationally, contains one covalently linked phycocyanobilin chromophore.

The protein localises to the plastid. It is found in the cyanelle thylakoid membrane. In terms of biological role, light-harvesting photosynthetic bile pigment-protein from the phycobiliprotein complex. Allophycocyanin has a maximum absorption at approximately 650 nanometers. The polypeptide is Allophycocyanin subunit beta-18 (apcF) (Cyanophora paradoxa).